Here is a 307-residue protein sequence, read N- to C-terminus: HTH-type transcriptional regulator DmlR (307 aa).

The HTH lysR-type domain maps to 5–62; sequence PLLNDLRVFMLVARRAGFAAVAEELGVSPAFVSKRIALLEQTLNVVLLHRTTRRVTIT. The H-T-H motif DNA-binding region spans 22–41; the sequence is FAAVAEELGVSPAFVSKRIA.

The protein belongs to the LysR transcriptional regulatory family.

In terms of biological role, transcriptional regulator required for the aerobic growth on D-malate as the sole carbon source. Induces the expression of dmlA in response to D-malate or L- or meso-tartrate. Negatively regulates its own expression. This Escherichia coli (strain K12) protein is HTH-type transcriptional regulator DmlR (dmlR).